We begin with the raw amino-acid sequence, 343 residues long: Glucokinase (343 aa).

ATP is bound at residue 18–23; the sequence is GDIGGT.

Belongs to the bacterial glucokinase family.

It is found in the cytoplasm. It carries out the reaction D-glucose + ATP = D-glucose 6-phosphate + ADP + H(+). This is Glucokinase from Brucella abortus (strain 2308).